Consider the following 43-residue polypeptide: uncharacterized protein (43 aa).

The first 16 residues, 1–16 (MKLLNFILIIFNALKS), serve as a signal peptide directing secretion. Residue Asn-37 is glycosylated (N-linked (GlcNAc...) asparagine; by host).

This is an uncharacterized protein from Acheta domesticus (House cricket).